A 146-amino-acid chain; its full sequence is Actin-depolymerizing factor 6 (146 aa).

A Phosphoserine modification is found at serine 13. The region spanning 14 to 146 (GMGVADESKT…DLEVLRERAN (133 aa)) is the ADF-H domain.

This sequence belongs to the actin-binding proteins ADF family. Phosphorylated. In terms of tissue distribution, expressed in vascular tissues of all organs.

It localises to the cytoplasm. The protein resides in the cytoskeleton. Functionally, actin-depolymerizing protein. Severs actin filaments (F-actin) and binds to actin monomers. This Arabidopsis thaliana (Mouse-ear cress) protein is Actin-depolymerizing factor 6 (ADF6).